An 839-amino-acid polypeptide reads, in one-letter code: MAIGITACVLSLINYQGLAYSAALINEPIQACVIAREVDLTDDIRTKFAQCLGWQADQSSPVCLGFYKPITVTPLASPDEVRILADTASFYRTQRSTLSGHVEMQQGQRVVNAQTAYVYRDPKTNEVTKIEFLNHVRYLEPDRMMIARKAVVYPQDKSGEVEDVLYRFNTNRSNALLPAWGRASLIKRFANQDYFLKEATYTTCAPQDKAWAIEAESISINNEKGKGIARNAKLRIHEWPVLYTPYLSFPTNRDRKSGFLMPIVGYSNVGGADLGIPYYWNMAPNYDMTLVPHIYTKRGLMLGGQFRYLTSKSTGTFNGNFLPKDKAFGRFLQDNEVEFPQIRGLSTNRWEVNFVDSTQFLSDLQLNVNFQQVSDDYYLQDFSTNLASVTQRQLLRQADLTYTTENWTFRGMGQSYQTLHPINEIPVSPVYERLPQLMARGYYDDLPFNAQLNILGQYDQFHWPNDSWNIALNNMPQGPRFHLNPILSVPMMKPWGYVTPSVQFVENYYDISRNYTWGTSRANYNLTIPRYSLDGGLYFERDLHLKGTYYIQTLEPRLFYLRVPYYNQTLIPVYDSGFMIFNVDQLFRTNRFSGFDRIGDANQLSYALTTRWLEDESGAEKANFSIGQIKYFSERRVQLCQSPTGFCTDNPDTFGNLSSTFGTSPVASRAVYKFNPAWGITGDYIWDPATRATNNADLNLHYQPARNAIINGGYSYLVNGDVTQVRNNDTENNALHQAILSAAWPLSEKWSGIGAYSYNISKNYSMMSFLGVQYDSCCWAMRILGGRTFRSLNEEFEPRYNNNIYLQILLKGLGSVASSDPSGILNTYIPGYYDPFRRR.

An N-terminal signal peptide occupies residues 1-21; the sequence is MAIGITACVLSLINYQGLAYS.

This sequence belongs to the LptD family. Component of the lipopolysaccharide transport and assembly complex. Interacts with LptE and LptA.

The protein resides in the cell outer membrane. Functionally, together with LptE, is involved in the assembly of lipopolysaccharide (LPS) at the surface of the outer membrane. This chain is LPS-assembly protein LptD, found in Legionella pneumophila (strain Lens).